We begin with the raw amino-acid sequence, 221 residues long: Glycerol metabolism activator (221 aa).

Positions 3–120 (KILIADDHPL…QMTDAIEQIL (118 aa)) constitute a Response regulatory domain. D55 is modified (4-aspartylphosphate). Residues 149–214 (APELLQALTR…QAILSAGDID (66 aa)) form the HTH luxR-type domain. The segment at residues 173–192 (NKQIAYNLDIAETTVKAHVS) is a DNA-binding region (H-T-H motif).

Its function is as follows. Positive activator for glycerol metabolism. Regulates the expression of qedA in a positive manner and governs the expression of ADH I and ADH IIB. General regulator of quinoprotein ethanol oxidation and affects expression of ADH IIG activity but is not the sole regulator. In Pseudomonas putida (Arthrobacter siderocapsulatus), this protein is Glycerol metabolism activator.